Consider the following 509-residue polypeptide: Protein disulfide-isomerase (509 aa).

The signal sequence occupies residues M1–A19. One can recognise a Thioredoxin 1 domain in the interval D20–G136. Catalysis depends on nucleophile residues C55 and C58. C55 and C58 are oxidised to a cystine. Position 202 is an N6-acetyllysine (K202). N6-succinyllysine is present on residues K224 and K273. Residues S333 and S359 each carry the phosphoserine modification. Residues E335–Q477 enclose the Thioredoxin 2 domain. Catalysis depends on nucleophile residues C399 and C402. C399 and C402 are disulfide-bonded. At S429 the chain carries Phosphoserine. Residues K506–L509 carry the Prevents secretion from ER motif.

It belongs to the protein disulfide isomerase family. Heterodimer; heterodimerizes with the protein microsomal triglyceride transfer MTTP. Homodimer. Monomers and homotetramers may also occur. Interacts with P4HA2, forming a heterotetramer consisting of 2 alpha subunits (P4HA2) and 2 beta (P4HB), where P4HB plays the role of a structural subunit; this tetramer catalyzes the formation of 4-hydroxyproline in collagen. Also constitutes the structural subunit of the microsomal triacylglycerol transfer protein MTTP in mammalian cells. Stabilizes both enzymes and retain them in the ER without contributing to the catalytic activity. Binds UBQLN1. Interacts with ERO1B. Interacts with ILDR2. Interacts with ERN1/IRE1A (via N-terminus); the interaction is enhanced by phosphorylation of P4HB by FAM20C in response to endoplasmic reticulum stress and results in attenuation of ERN1 activity. Phosphorylation of Ser-359 by FAM20C is induced by endoplasmic reticulum stress and results in a functional switch from oxidoreductase to molecular chaperone. It also promotes interaction with ERN1.

It localises to the endoplasmic reticulum. It is found in the endoplasmic reticulum lumen. Its subcellular location is the melanosome. The protein resides in the cell membrane. The enzyme catalyses Catalyzes the rearrangement of -S-S- bonds in proteins.. This multifunctional protein catalyzes the formation, breakage and rearrangement of disulfide bonds. At the cell surface, seems to act as a reductase that cleaves disulfide bonds of proteins attached to the cell. May therefore cause structural modifications of exofacial proteins. Inside the cell, seems to form/rearrange disulfide bonds of nascent proteins. At high concentrations and following phosphorylation by FAM20C, functions as a chaperone that inhibits aggregation of misfolded proteins. At low concentrations, facilitates aggregation (anti-chaperone activity). May be involved with other chaperones in the structural modification of the TG precursor in hormone biogenesis. Also acts as a structural subunit of various enzymes such as prolyl 4-hydroxylase and microsomal triacylglycerol transfer protein MTTP. Receptor for LGALS9; the interaction retains P4HB at the cell surface of Th2 T helper cells, increasing disulfide reductase activity at the plasma membrane, altering the plasma membrane redox state and enhancing cell migration. The polypeptide is Protein disulfide-isomerase (P4hb) (Rattus norvegicus (Rat)).